The primary structure comprises 380 residues: L-lactate dehydrogenase (380 aa).

The 380-residue stretch at 1–380 (MIISSPNDYR…TRDSLVGLPR (380 aa)) folds into the FMN hydroxy acid dehydrogenase domain. Residue tyrosine 24 participates in substrate binding. FMN contacts are provided by serine 106 and glutamine 127. Residue tyrosine 129 participates in substrate binding. Threonine 155 contributes to the FMN binding site. Arginine 164 serves as a coordination point for substrate. Lysine 251 lines the FMN pocket. The Proton acceptor role is filled by histidine 275. Arginine 278 contacts substrate. 306–330 (DSGIRTGLDVVRMLALGAKGVLLGR) provides a ligand contact to FMN.

This sequence belongs to the FMN-dependent alpha-hydroxy acid dehydrogenase family. Requires FMN as cofactor.

Its subcellular location is the cell inner membrane. It carries out the reaction (S)-lactate + A = pyruvate + AH2. Functionally, catalyzes the conversion of L-lactate to pyruvate. Is coupled to the respiratory chain. The protein is L-lactate dehydrogenase of Azorhizobium caulinodans (strain ATCC 43989 / DSM 5975 / JCM 20966 / LMG 6465 / NBRC 14845 / NCIMB 13405 / ORS 571).